The following is a 733-amino-acid chain: tRNA (guanine(27)-N(2))-dimethyltransferase (733 aa).

The segment covering 1–18 (MENMAEEELLPLEKEEVE) has biased composition (acidic residues). The segment at 1–78 (MENMAEEELL…LASAPEEAKS (78 aa)) is disordered. A Phosphothreonine modification is found at Thr26. Composition is skewed to low complexity over residues 39–49 (PDSALDSAPTP) and 57–73 (PALAQAPALSPSLASAP). Phosphoserine is present on Ser66. A Nucleolar localization signal motif is present at residues 135–139 (HKLRR). The C2H2-type zinc-finger motif lies at 184–206 (YHCIICSATITRRTDMLGHVRRH). The region spanning 227 to 688 (EILKEADTDV…APLMQFKSIL (462 aa)) is the Trm1 methyltransferase domain. 4 residues coordinate S-adenosyl-L-methionine: Arg260, Asp307, Asp357, and Ala358. 4 residues coordinate Zn(2+): Cys488, Cys491, Cys513, and Cys515. Residue Lys585 forms a Glycyl lysine isopeptide (Lys-Gly) (interchain with G-Cter in SUMO2) linkage. Ser612 and Ser707 each carry phosphoserine.

It belongs to the class I-like SAM-binding methyltransferase superfamily. Trm1 family. As to expression, widely expressed.

It localises to the nucleus. Its subcellular location is the nucleolus. It catalyses the reaction guanosine(27) in tRNA(Tyr) + 2 S-adenosyl-L-methionine = N(2)-dimethylguanosine(27) in tRNA(Tyr) + 2 S-adenosyl-L-homocysteine + 2 H(+). Its function is as follows. Specifically dimethylates a single guanine residue at position 27 of tRNA(Tyr) using S-adenosyl-L-methionine as donor of the methyl groups. Dimethylation at position 27 of tRNA(Tyr) is required for efficient translation of tyrosine codons. Also required to maintain 3-(3-amino-3-carboxypropyl)uridine (acp3U) in the D-loop of several cytoplasmic tRNAs. The polypeptide is tRNA (guanine(27)-N(2))-dimethyltransferase (Homo sapiens (Human)).